The chain runs to 117 residues: Large ribosomal subunit protein bL20 (117 aa).

The protein belongs to the bacterial ribosomal protein bL20 family.

In terms of biological role, binds directly to 23S ribosomal RNA and is necessary for the in vitro assembly process of the 50S ribosomal subunit. It is not involved in the protein synthesizing functions of that subunit. This is Large ribosomal subunit protein bL20 from Thermomicrobium roseum (strain ATCC 27502 / DSM 5159 / P-2).